The chain runs to 96 residues: Molybdopterin synthase sulfur carrier subunit (96 aa).

1-thioglycine; alternate is present on glycine 96. At glycine 96 the chain carries Glycyl adenylate; alternate.

The protein belongs to the MoaD family. MOCS2A subfamily. Heterotetramer; composed of 2 small (MOCS2A) and 2 large (MOCS2B) subunits. In terms of processing, C-terminal thiocarboxylation occurs in 2 steps, it is first acyl-adenylated (-COAMP) via the hesA/moeB/thiF part of MOCS3, then thiocarboxylated (-COSH) via the rhodanese domain of MOCS3.

The protein resides in the cytoplasm. It functions in the pathway cofactor biosynthesis; molybdopterin biosynthesis. Its function is as follows. Acts as a sulfur carrier required for molybdopterin biosynthesis. Component of the molybdopterin synthase complex that catalyzes the conversion of precursor Z into molybdopterin by mediating the incorporation of 2 sulfur atoms into precursor Z to generate a dithiolene group. In the complex, serves as sulfur donor by being thiocarboxylated (-COSH) at its C-terminus by MOCS3. After interaction with MOCS2B, the sulfur is then transferred to precursor Z to form molybdopterin. The protein is Molybdopterin synthase sulfur carrier subunit of Arabidopsis thaliana (Mouse-ear cress).